The primary structure comprises 152 residues: MVVQKSVVRSRVFGELEVSEENIIFFEEGIPAFENLKKFVIVKEDQSPFYWLQSVEDKDIAFVIINPFEIKPDYEFDLPDEIVNKLEITSAEDVAVFCIVVIPEDVKQTRVNLKAPVIINVNKRKGMQYLLDDERYPLRYYLFENLNSNVQK.

Belongs to the FliW family. As to quaternary structure, interacts with translational regulator CsrA and flagellin(s).

The protein resides in the cytoplasm. In terms of biological role, acts as an anti-CsrA protein, binds CsrA and prevents it from repressing translation of its target genes, one of which is flagellin. Binds to flagellin and participates in the assembly of the flagellum. The protein is Flagellar assembly factor FliW of Caldicellulosiruptor saccharolyticus (strain ATCC 43494 / DSM 8903 / Tp8T 6331).